The chain runs to 805 residues: Chloride channel protein (805 aa).

The Cytoplasmic segment spans residues M1–L48. 2 consecutive transmembrane segments (helical) span residues G49–L86 and L93–V116. Residues G122–P126 carry the Selectivity filter part_1 motif. S123 serves as a coordination point for chloride. The segment at residues I125–I132 is an intramembrane region (helical). 2 helical membrane passes run L141–A159 and E166–L184. The Selectivity filter part_2 motif lies at G164–P168. Intramembrane regions (helical) lie at residues I201–C213 and P217–I225. The next 3 helical transmembrane spans lie at Y237–V256, M283–M311, and I320–L339. N365 is a glycosylation site (N-linked (GlcNAc...) asparagine). 2 helical membrane passes run L388–A408 and G416–L439. The Selectivity filter part_3 motif lies at G416–P420. F418 contacts chloride. Residues G456–V470 constitute an intramembrane region (helical). An intramembrane region (note=Loop between two helices) is located at residues T471 to H472. Residues A473 to T484 constitute an intramembrane region (helical). Positions G485 to H489 form an intramembrane region, note=Loop between two helices. The helical transmembrane segment at V490–L507 threads the bilayer. Residues Q508–K805 lie on the Cytoplasmic side of the membrane. Chloride is bound at residue Y512. The CBS 1 domain maps to M543–A601. Disordered stretches follow at residues P606–F625 and K653–T684. Residues I719–F776 form the CBS 2 domain.

It belongs to the chloride channel (TC 2.A.49) family. ClC-0 subfamily. As to quaternary structure, homodimer. Each subunit contains a channel ('Double barreled channel').

The protein localises to the membrane. Its function is as follows. Voltage-gated chloride channel. This channel is thought to ensure the high conductance of the non-innervated membrane of the electrocyte necessary for efficient current generation caused by sodium influx through the acetylcholine receptor at the innervated membrane. This chain is Chloride channel protein, found in Torpedo marmorata (Marbled electric ray).